The primary structure comprises 58 residues: Large ribosomal subunit protein uL30 (58 aa).

The protein belongs to the universal ribosomal protein uL30 family. In terms of assembly, part of the 50S ribosomal subunit.

The chain is Large ribosomal subunit protein uL30 from Vibrio vulnificus (strain CMCP6).